Reading from the N-terminus, the 606-residue chain is Double-stranded RNA-binding protein Staufen homolog 2 (606 aa).

2 consecutive DRBM domains span residues 8-75 (TPMC…ESSL) and 95-181 (TPTV…ALKN). 2 disordered regions span residues 57-97 (SIKK…ITPT) and 177-205 (QALK…SDAS). Polar residues predominate over residues 85–97 (ADSNSNPGSITPT). Residues 192-205 (SEEKKETEENSDAS) show a composition bias toward basic and acidic residues. DRBM domains follow at residues 207–274 (SEIS…ELKK), 307–375 (NPIS…QLGY), and 493–557 (QPSQ…QLSE). The segment at 580–606 (RLAERTESKPTNSGTTAQDCKDSKAVV) is disordered. Residues 588–597 (KPTNSGTTAQ) are compositionally biased toward polar residues.

RNA-binding protein required for the microtubule-dependent transport of RNAs within polarized cell types. The sequence is that of Double-stranded RNA-binding protein Staufen homolog 2 (stau2) from Danio rerio (Zebrafish).